Reading from the N-terminus, the 100-residue chain is MKISEEEVRHVAKLSKLSFSESETTAFATTLSKIVDMVELLNEVDTEGVAITTTMADKKNVMRQDVAEEGTDRALLFKNVPEKENHFIKVPAILYDGGDA.

This sequence belongs to the GatC family. As to quaternary structure, heterotrimer of A, B and C subunits.

The catalysed reaction is L-glutamyl-tRNA(Gln) + L-glutamine + ATP + H2O = L-glutaminyl-tRNA(Gln) + L-glutamate + ADP + phosphate + H(+). It catalyses the reaction L-aspartyl-tRNA(Asn) + L-glutamine + ATP + H2O = L-asparaginyl-tRNA(Asn) + L-glutamate + ADP + phosphate + 2 H(+). Functionally, allows the formation of correctly charged Asn-tRNA(Asn) or Gln-tRNA(Gln) through the transamidation of misacylated Asp-tRNA(Asn) or Glu-tRNA(Gln) in organisms which lack either or both of asparaginyl-tRNA or glutaminyl-tRNA synthetases. The reaction takes place in the presence of glutamine and ATP through an activated phospho-Asp-tRNA(Asn) or phospho-Glu-tRNA(Gln). This chain is Aspartyl/glutamyl-tRNA(Asn/Gln) amidotransferase subunit C, found in Streptococcus pyogenes serotype M18 (strain MGAS8232).